Consider the following 281-residue polypeptide: MKLAVYGKGGIGKSTTSCNISVALARRGKKVLQIGCDPKHDSTFTLTGFLIPTIIDTLQAKDYHYEDVWPEDVIYKGYGGVDCVEAGGPPAGAGCGGYVVGETVKLLKELNAFDEYDVILFDVLGDVVCGGFAAPLNYADYCLIVTDNGFDALFAANRIAASVREKARTHPLRLAGLIGNRTNKRDLIEKYVEAVPMPILEVLPLIEDIRVSRVKGKTLFEMAESDPSLNDVCDYYLNIADQILARPEGVVPKDVPDRDLFALLSDFYLNPQGSERSLAAV.

ATP contacts are provided by residues 10-15 (GIGKST) and Lys39. Mg(2+) is bound at residue Ser14. 2 residues coordinate [4Fe-4S] cluster: Cys95 and Cys129. Position 180–181 (180–181 (NR)) interacts with ATP.

This sequence belongs to the NifH/BchL/ChlL family. As to quaternary structure, homodimer. Protochlorophyllide reductase is composed of three subunits; ChlL, ChlN and ChlB. [4Fe-4S] cluster is required as a cofactor.

It carries out the reaction chlorophyllide a + oxidized 2[4Fe-4S]-[ferredoxin] + 2 ADP + 2 phosphate = protochlorophyllide a + reduced 2[4Fe-4S]-[ferredoxin] + 2 ATP + 2 H2O. It participates in porphyrin-containing compound metabolism; chlorophyll biosynthesis (light-independent). Functionally, component of the dark-operative protochlorophyllide reductase (DPOR) that uses Mg-ATP and reduced ferredoxin to reduce ring D of protochlorophyllide (Pchlide) to form chlorophyllide a (Chlide). This reaction is light-independent. The L component serves as a unique electron donor to the NB-component of the complex, and binds Mg-ATP. The polypeptide is Light-independent protochlorophyllide reductase iron-sulfur ATP-binding protein (Thermosynechococcus vestitus (strain NIES-2133 / IAM M-273 / BP-1)).